A 269-amino-acid polypeptide reads, in one-letter code: 3'(2'),5'-bisphosphate nucleotidase CysQ (269 aa).

Mg(2+) is bound by residues E69, D89, L91, D92, and D216. Position 69 (E69) interacts with substrate. Residues 91–94 (LDGT) and D216 contribute to the substrate site.

This sequence belongs to the inositol monophosphatase superfamily. CysQ family. It depends on Mg(2+) as a cofactor.

The protein resides in the cell inner membrane. The catalysed reaction is adenosine 3',5'-bisphosphate + H2O = AMP + phosphate. Functionally, converts adenosine-3',5'-bisphosphate (PAP) to AMP. The chain is 3'(2'),5'-bisphosphate nucleotidase CysQ from Aggregatibacter actinomycetemcomitans (Actinobacillus actinomycetemcomitans).